Reading from the N-terminus, the 56-residue chain is Ovomucoid (56 aa).

The 51-residue stretch at 6 to 56 folds into the Kazal-like domain; the sequence is VDCSEYPKPACTMEQRPLCGSDNKTYGNKCNFCNAVVESNGTLTLSHFGKC. Cystine bridges form between cysteine 8/cysteine 38, cysteine 16/cysteine 35, and cysteine 24/cysteine 56. Asparagine 45 carries an N-linked (GlcNAc...) asparagine glycan.

The protein localises to the secreted. The protein is Ovomucoid of Afropavo congensis (Congo peafowl).